The chain runs to 337 residues: 2-oxoglutarate receptor 1 (337 aa).

At 1–34 (MNEPLDYLANASDFPDYAAAFGNCTDENIPLKMH) the chain is on the extracellular side. 2 N-linked (GlcNAc...) asparagine glycosylation sites follow: Asn-10 and Asn-23. Residues 35 to 55 (YLPVIYGIIFLVGFPGNAVVI) traverse the membrane as a helical segment. Residues 56-69 (STYIFKMRPWKSST) lie on the Cytoplasmic side of the membrane. A helical membrane pass occupies residues 70–90 (IIMLNLACTDLLYLTSLPFLI). Residues 91–116 (HYYASGENWIFGDFMCKFIRFSFHFN) lie on the Extracellular side of the membrane. A disulfide bond links Cys-106 and Cys-183. Residues 117–137 (LYSSILFLTCFSIFRYCVIIH) form a helical membrane-spanning segment. The Cytoplasmic segment spans residues 138-151 (PMSCFSIHKTRCAV). The chain crosses the membrane as a helical span at residues 152-172 (VACAVVWIISLVAVIPMTFLI). Over 173-201 (TSTNRTNRSACLDLTSSDELNTIKWYNLI) the chain is Extracellular. 2 N-linked (GlcNAc...) asparagine glycosylation sites follow: Asn-176 and Asn-179. A helical membrane pass occupies residues 202–222 (LTATTFCLPLVIVTLCYTTII). Residues 223–242 (HTLTHGLQTDSCLKQKARRL) lie on the Cytoplasmic side of the membrane. The chain crosses the membrane as a helical span at residues 243-263 (TILLLLAFYVCFLPFHILRVI). Residues 264–284 (RIESRLLSISCSIENQIHEAY) lie on the Extracellular side of the membrane. Residues 285–305 (IVSRPLAALNTFGNLLLYVVV) form a helical membrane-spanning segment. The Cytoplasmic portion of the chain corresponds to 306–337 (SDNFQQAVCSTVRCKVSGNLEQAKKISYSNNP).

It belongs to the G-protein coupled receptor 1 family. As to expression, detected in kidney and, to a lower extent, in placenta. Not detected in brain tissues including the frontal cortex, caudate putamen, thalamus, hypothalamus, hippocampus or pons.

It is found in the cell membrane. G protein-coupled receptor for dicarboxylates and amino dicarboxylates. Receptor for itaconate, a metabolite produced by myeloid lineages. In the respiratory epithelium, couples the binding of itaconate to the activation of GNA11 and downstream intracellular Ca(2+) release, leading to mucocilliary clearance of airborne pathogens. Receptor for leukotriene E4 (LTE4) produced by mast cells upon allergic inflammation. Binds with high affinity to LTE4 and elicits mucin release from pulmonary epithelium in response to airborne fungi allergens. Regulates mucin-producing goblet cell homeostasis. Receptor for alpha-ketoglutarate produced by proximal tubule renal cells upon metabolic alkalosis. In an intrarenal paracrine signaling pathway, binds alpha-ketoglutarate and drives transepithelial salt reabsorption and bicarbonate secretion by SLC26A4/pendrin-positive intercalated cells. The protein is 2-oxoglutarate receptor 1 (OXGR1) of Homo sapiens (Human).